Here is a 280-residue protein sequence, read N- to C-terminus: Bifunctional protein FolD (280 aa).

NADP(+) contacts are provided by residues 166 to 168 and serine 191; that span reads GRS.

This sequence belongs to the tetrahydrofolate dehydrogenase/cyclohydrolase family. In terms of assembly, homodimer.

The enzyme catalyses (6R)-5,10-methylene-5,6,7,8-tetrahydrofolate + NADP(+) = (6R)-5,10-methenyltetrahydrofolate + NADPH. It carries out the reaction (6R)-5,10-methenyltetrahydrofolate + H2O = (6R)-10-formyltetrahydrofolate + H(+). It functions in the pathway one-carbon metabolism; tetrahydrofolate interconversion. Catalyzes the oxidation of 5,10-methylenetetrahydrofolate to 5,10-methenyltetrahydrofolate and then the hydrolysis of 5,10-methenyltetrahydrofolate to 10-formyltetrahydrofolate. The chain is Bifunctional protein FolD from Saccharophagus degradans (strain 2-40 / ATCC 43961 / DSM 17024).